A 193-amino-acid chain; its full sequence is Ribonuclease HII (193 aa).

Residues 1–193 (MTLGIDEAGR…SFALKNNWFS (193 aa)) enclose the RNase H type-2 domain. The a divalent metal cation site is built by Asp-6, Glu-7, and Asp-103.

The protein belongs to the RNase HII family. Mn(2+) serves as cofactor. Mg(2+) is required as a cofactor.

It is found in the cytoplasm. It carries out the reaction Endonucleolytic cleavage to 5'-phosphomonoester.. Its function is as follows. Endonuclease that specifically degrades the RNA of RNA-DNA hybrids. This is Ribonuclease HII from Helicobacter acinonychis (strain Sheeba).